Here is a 228-residue protein sequence, read N- to C-terminus: Endonuclease V (228 aa).

Mg(2+) contacts are provided by aspartate 43 and aspartate 109.

It belongs to the endonuclease V family. The cofactor is Mg(2+).

It is found in the cytoplasm. It carries out the reaction Endonucleolytic cleavage at apurinic or apyrimidinic sites to products with a 5'-phosphate.. DNA repair enzyme involved in the repair of deaminated bases. Selectively cleaves double-stranded DNA at the second phosphodiester bond 3' to a deoxyinosine leaving behind the intact lesion on the nicked DNA. This Dictyoglomus thermophilum (strain ATCC 35947 / DSM 3960 / H-6-12) protein is Endonuclease V.